Reading from the N-terminus, the 1069-residue chain is Protocadherin-7 (1069 aa).

Positions 1–28 are cleaved as a signal peptide; the sequence is MLRMRTAGWARGWCLGCCLLLPLSLSLA. 7 Cadherin domains span residues 29-143, 144-308, 309-415, 424-535, 536-639, 640-742, and 745-862; these read AAKQ…TPTF, PSPV…SPRF, EKSV…VPSI, PLKD…PPMF, GQSV…DPKF, MQDV…APTV, and PKNI…IPLT. The Extracellular portion of the chain corresponds to 29–879; sequence AAKQLLRYRL…SYEISKQRLS (851 aa). An N-linked (GlcNAc...) asparagine glycan is attached at asparagine 79. The interval 182 to 242 is disordered; the sequence is LLQEPGGGGS…GGTNPGGRSS (61 aa). Gly residues predominate over residues 207 to 221; the sequence is PGGGGNGASGGGSGG. N-linked (GlcNAc...) asparagine glycosylation is found at asparagine 689, asparagine 747, asparagine 780, asparagine 822, asparagine 840, and asparagine 845. A helical transmembrane segment spans residues 880–900; the sequence is IVIGVVAGIMTVILIILIVVM. At 901-1069 the chain is on the cytoplasmic side; that stretch reads ARYCRSKNKN…RLHPYITVFG (169 aa). A disordered region spans residues 910-988; the sequence is NGYEAGKKDH…RYRSVNGGPG (79 aa). Basic residues predominate over residues 930-944; that stretch reads KSKKPKKDKKNKKSK. A phosphoserine mark is found at serine 989 and serine 1011.

Expressed predominantly in brain and heart and at lower levels in various other tissues.

It localises to the cell membrane. The sequence is that of Protocadherin-7 (PCDH7) from Homo sapiens (Human).